We begin with the raw amino-acid sequence, 171 residues long: Neuronal vesicle trafficking-associated protein 2 (171 aa).

A disordered region spans residues methionine 1–glycine 21. Topologically, residues methionine 1–threonine 71 are cytoplasmic. The chain crosses the membrane as a helical; Signal-anchor for type II membrane protein span at residues valine 72–tyrosine 92. Over lysine 93–histidine 171 the chain is Lumenal.

Belongs to the NSG family.

It localises to the membrane. The protein resides in the golgi apparatus. Its subcellular location is the trans-Golgi network membrane. The protein localises to the cell projection. It is found in the dendrite. It localises to the endosome membrane. The protein resides in the early endosome membrane. Its subcellular location is the late endosome membrane. The protein localises to the lysosome lumen. It is found in the cytoplasmic vesicle membrane. It localises to the golgi stack membrane. The protein resides in the endosome. Its subcellular location is the multivesicular body membrane. This chain is Neuronal vesicle trafficking-associated protein 2, found in Bos taurus (Bovine).